Here is a 204-residue protein sequence, read N- to C-terminus: UPF0637 protein LMHCC_1566 (204 aa).

It belongs to the UPF0637 family.

The sequence is that of UPF0637 protein LMHCC_1566 from Listeria monocytogenes serotype 4a (strain HCC23).